The chain runs to 371 residues: Probable endolytic peptidoglycan transglycosylase RlpA (371 aa).

An N-terminal signal peptide occupies residues 1-25; it reads MNQRHLWTIVALSVTVLGTPAVGRT. Over residues 177–191 the composition is skewed to low complexity; it reads LVASQSQNKSSSSQQ. The tract at residues 177–196 is disordered; sequence LVASQSQNKSSSSQQKSERY.

It belongs to the RlpA family.

Lytic transglycosylase with a strong preference for naked glycan strands that lack stem peptides. The protein is Probable endolytic peptidoglycan transglycosylase RlpA of Nostoc sp. (strain PCC 7120 / SAG 25.82 / UTEX 2576).